The primary structure comprises 296 residues: Phosphate transport system permease protein PstA (296 aa).

Residues 1–28 (MAMVEMQTTAALAESRRKMQARRRLKNR) lie on the Cytoplasmic side of the membrane. Residues 29-50 (IALTLSMATMAFGLFWLIWILM) traverse the membrane as a helical segment. The Periplasmic segment spans residues 51–82 (STITRGIDGMSLALFTEMTPPPNTEGGGLANA). Residues 83 to 102 (LAGSGLLILWATVFGTPLGI) traverse the membrane as a helical segment. Residues 83–286 (LAGSGLLILW…LCVLLLNILA (204 aa)) form the ABC transmembrane type-1 domain. Residues 103-126 (MAGIYLAEYGRKSWLAEVIRFIND) are Cytoplasmic-facing. A helical membrane pass occupies residues 127 to 146 (ILLSAPSIVVGLFVYTIVVA). The Periplasmic portion of the chain corresponds to 147–150 (QMEH). Residues 151 to 169 (FSGWAGVIALALLQVPIVI) form a helical membrane-spanning segment. The Cytoplasmic segment spans residues 170–204 (RTTENMLKLVPYSLREAAYALGTPKWKMISAITLK). The helical transmembrane segment at 205-223 (ASVSGIMTGILLAIARIAG) threads the bilayer. The Periplasmic portion of the chain corresponds to 224–266 (ETAPLLFTALSNQFWSTDMMQPIANLPVTIFKFAMSPFAEWQQ). The helical transmembrane segment at 267 to 286 (LAWAGVLIITLCVLLLNILA) threads the bilayer. The Cytoplasmic portion of the chain corresponds to 287–296 (RVVFAKNKHG).

Belongs to the binding-protein-dependent transport system permease family. CysTW subfamily.

The protein localises to the cell inner membrane. Functionally, part of the binding-protein-dependent transport system for phosphate; probably responsible for the translocation of the substrate across the membrane. The protein is Phosphate transport system permease protein PstA (pstA) of Escherichia coli (strain K12).